We begin with the raw amino-acid sequence, 430 residues long: Tol-Pal system protein TolB (430 aa).

Positions 1–21 are cleaved as a signal peptide; sequence MKQALRVAFGFLMLWAAVLHA.

The protein belongs to the TolB family. The Tol-Pal system is composed of five core proteins: the inner membrane proteins TolA, TolQ and TolR, the periplasmic protein TolB and the outer membrane protein Pal. They form a network linking the inner and outer membranes and the peptidoglycan layer.

It localises to the periplasm. Functionally, part of the Tol-Pal system, which plays a role in outer membrane invagination during cell division and is important for maintaining outer membrane integrity. TolB occupies a key intermediary position in the Tol-Pal system because it communicates directly with both membrane-embedded components, Pal in the outer membrane and TolA in the inner membrane. The chain is Tol-Pal system protein TolB from Salmonella typhi.